A 311-amino-acid polypeptide reads, in one-letter code: Protein translocase subunit SecF (311 aa).

6 consecutive transmembrane segments (helical) span residues Val-23–Tyr-42, Ile-140–Val-160, Trp-164–Phe-184, Leu-194–Ile-214, Ile-246–Ala-266, and Val-272–Ile-292.

It belongs to the SecD/SecF family. SecF subfamily. As to quaternary structure, forms a complex with SecD. Part of the essential Sec protein translocation apparatus which comprises SecA, SecYEG and auxiliary proteins SecDF-YajC and YidC.

Its subcellular location is the cell inner membrane. Part of the Sec protein translocase complex. Interacts with the SecYEG preprotein conducting channel. SecDF uses the proton motive force (PMF) to complete protein translocation after the ATP-dependent function of SecA. The sequence is that of Protein translocase subunit SecF from Rickettsia prowazekii (strain Madrid E).